A 1121-amino-acid polypeptide reads, in one-letter code: Cuscuta receptor 1 (1121 aa).

The first 20 residues, 1–20 (MGNIKFLLLVFFLIVVVVNG), serve as a signal peptide directing secretion. At 21 to 1058 (CWEEERNALL…EESSELEDIQ (1038 aa)) the chain is on the extracellular side. N-linked (GlcNAc...) asparagine glycosylation is present at Asn-91. 8 LRR repeats span residues 98–122 (FKSL…GFSK), 126–152 (LPNL…CWIS), 185–209 (LSNL…ALGE), 210–233 (LRNL…SLKI), 234–259 (FPSL…IIDL), 260–282 (SNLE…KGNK), 284–308 (MTSL…SLKS), and 309–331 (FSSL…IYAL). Residue Asn-224 is glycosylated (N-linked (GlcNAc...) asparagine). N-linked (GlcNAc...) asparagine glycans are attached at residues Asn-298, Asn-321, and Asn-333. The LRR 9 repeat unit spans residues 334 to 360 (LSTVEYLYFKGSSLNDNFLPNIGQMTS). Asn-372 and Asn-406 each carry an N-linked (GlcNAc...) asparagine glycan. LRR repeat units follow at residues 383–406 (LKYI…CLGN), 407–432 (LTSL…IWRR), 433–457 (LTSL…QFSD), 459–479 (KKLI…EYQN), 507–531 (QYDL…LLEN), 556–580 (HLHL…MSLA), 581–605 (FPKL…ISGI), 607–628 (LTIL…LAVV), 630–654 (SPQL…EFRP), 655–678 (HVLS…VFLS), 680–701 (LITL…TRDN), 702–725 (RRLL…ICNL), 726–749 (KIIN…VSSL), 751–772 (LKHI…IFNF), 773–796 (SSLI…IGSL), 797–820 (SNLN…ICML), 822–846 (NLSI…YLTQ), 914–938 (LKYM…LGNM), 939–961 (SNIH…TFSN), 962–986 (LQEI…LLEL), and 988–1012 (SLAV…QFGT). N-linked (GlcNAc...) asparagine glycosylation is found at Asn-531, Asn-576, and Asn-588. The N-linked (GlcNAc...) asparagine glycan is linked to Asn-689. Asn-771 is a glycosylation site (N-linked (GlcNAc...) asparagine). N-linked (GlcNAc...) asparagine glycans are attached at residues Asn-822, Asn-937, Asn-945, Asn-976, Asn-998, Asn-1014, and Asn-1041. The chain crosses the membrane as a helical span at residues 1059–1079 (CFYIGFVVSFGAILLGLAAAL). The Cytoplasmic portion of the chain corresponds to 1080–1121 (CLNRHWRRAWFRMIEALMFYCYYFVLDNIVTPIKSRWYKNVG).

It belongs to the RLP family. In terms of assembly, interacts with an 11 kDa glycine-rich protein (GRP) of C.reflexa. Interacts with SOBIR1 and SOBIR1-like kinases; presence or absence of GRP has no effect on interaction.

It is found in the cell membrane. Its subcellular location is the cell surface. Functionally, involved in plant defense. Contributes to resistance against parasitic plant C.reflexa. Acts as a receptor for the 11 kDa glycine-rich protein (GRP) of C.reflexa inducing immune responses such as emission of stress-related phytohormone ethylene, reactive oxygen species (ROS) release, and hypersensitive cell death. Recognizes a specific pathogen-associated molecular pattern (PAMP), a cysteine-rich peptide 21 (crip21), from GRP located on the cell wall of C.reflexa. This chain is Cuscuta receptor 1, found in Solanum lycopersicum (Tomato).